Here is a 249-residue protein sequence, read N- to C-terminus: Metallo-beta-lactamase type 2 (249 aa).

Residues M1–G22 form the signal peptide. 5 residues coordinate Zn(2+): H98, H100, D102, H161, and C180. K183 serves as a coordination point for substrate. H222 provides a ligand contact to Zn(2+).

This sequence belongs to the metallo-beta-lactamase superfamily. Class-B beta-lactamase family. In terms of assembly, monomer. Zn(2+) serves as cofactor.

Its subcellular location is the periplasm. The enzyme catalyses a beta-lactam + H2O = a substituted beta-amino acid. Confers resistance to the different beta-lactams antibiotics (penicillin, cephalosporin and carbapenem) via the hydrolysis of the beta-lactam ring. This is Metallo-beta-lactamase type 2 (blaB3) from Elizabethkingia meningoseptica (Chryseobacterium meningosepticum).